The following is a 512-amino-acid chain: Cytochrome P450 26B1 (512 aa).

Heme is bound at residue C441.

This sequence belongs to the cytochrome P450 family. Heme is required as a cofactor.

Its subcellular location is the endoplasmic reticulum membrane. It is found in the microsome membrane. The enzyme catalyses all-trans-retinoate + reduced [NADPH--hemoprotein reductase] + O2 = all-trans-4-hydroxyretinoate + oxidized [NADPH--hemoprotein reductase] + H2O + H(+). It catalyses the reaction all-trans-retinoate + reduced [NADPH--hemoprotein reductase] + O2 = all-trans-18-hydroxyretinoate + oxidized [NADPH--hemoprotein reductase] + H2O + H(+). In terms of biological role, a cytochrome P450 monooxygenase involved in the metabolism of retinoates (RAs), the active metabolites of vitamin A, and critical signaling molecules in animals. RAs exist as at least four different isomers: all-trans-RA (atRA), 9-cis-RA, 13-cis-RA, and 9,13-dicis-RA, where atRA is considered to be the biologically active isomer, although 9-cis-RA and 13-cis-RA also have activity. Catalyzes the hydroxylation of atRA primarily at C-4 and C-18, thereby contributing to the regulation of atRA homeostasis and signaling. Hydroxylation of atRA limits its biological activity and initiates a degradative process leading to its eventual elimination. Involved in the convertion of atRA to all-trans-4-oxo-RA. Can oxidize all-trans-13,14-dihydroretinoate (DRA) to metabolites which could include all-trans-4-oxo-DRA, all-trans-4-hydroxy-DRA, all-trans-5,8-epoxy-DRA, and all-trans-18-hydroxy-DRA. Shows preference for the following substrates: atRA &gt; 9-cis-RA &gt; 13-cis-RA. Plays a central role in germ cell development: acts by degrading RAs in the developing testis, preventing STRA8 expression, thereby leading to delay of meiosis. Required for the maintenance of the undifferentiated state of male germ cells during embryonic development in Sertoli cells, inducing arrest in G0 phase of the cell cycle and preventing meiotic entry. Plays a role in skeletal development, both at the level of patterning and in the ossification of bone and the establishment of some synovial joints. Essential for postnatal survival. Functionally, also has a significant activity in oxidation of tazarotenic acid and may therefore metabolize that xenobiotic in vivo. This Bos taurus (Bovine) protein is Cytochrome P450 26B1 (CYP26B1).